The following is a 501-amino-acid chain: Aerobic glycerol-3-phosphate dehydrogenase (501 aa).

5 to 33 contacts FAD; it reads DLIVIGGGINGAGIAADAAGRGLSVLMLE.

It belongs to the FAD-dependent glycerol-3-phosphate dehydrogenase family. It depends on FAD as a cofactor.

It is found in the cytoplasm. The catalysed reaction is a quinone + sn-glycerol 3-phosphate = dihydroxyacetone phosphate + a quinol. Its pathway is polyol metabolism; glycerol degradation via glycerol kinase pathway; glycerone phosphate from sn-glycerol 3-phosphate (aerobic route): step 1/1. In terms of biological role, conversion of glycerol 3-phosphate to dihydroxyacetone. Uses molecular oxygen or nitrate as electron acceptor. In Escherichia coli (strain K12), this protein is Aerobic glycerol-3-phosphate dehydrogenase (glpD).